Here is a 322-residue protein sequence, read N- to C-terminus: Lung adenoma susceptibility protein 2 homolog (322 aa).

An N-terminal signal peptide occupies residues 1–31; it reads MAKSKTKHRLCSRESSVSSLLASCSLSDSNS. The span at 148 to 157 shows a compositional bias: basic residues; that stretch reads TNKKNKKCHG. Disordered regions lie at residues 148-175 and 228-248; these read TNKK…GPST and FKSP…RAKS. A Phosphoserine modification is found at Ser161. A compositionally biased stretch (polar residues) spans 236–247; the sequence is SDDSPQQTSRAK.

It is found in the secreted. In terms of biological role, might play a role in cell proliferation. In Macaca fascicularis (Crab-eating macaque), this protein is Lung adenoma susceptibility protein 2 homolog (LAS2).